Here is a 491-residue protein sequence, read N- to C-terminus: MKLNELMQAIPVFTGEVSETIEISHIAQDSRKVKPGTLFICIDGEVVDGHKFASRAVELGAVAIIAEKQVDVSIPVIYVRDSKRAMAMLADYFYGSPTQALKLVGITGTNGKTTVSHLVEQIVRENGEQTGLIGTMYRKIGDQILETKNTTPDSLTLQETFRDMLLSGVSTAVMEVSSHALVQGRVYGSDYDVAVFMNLSQDHLDYHHTMEEYANAKSLLFAQLGNSYHTSNPKIAVLNADDAESVRMQKATAAHIITFGIKQEADFQASNIKITSHGSTFDLGTPVGNFTLKIKMIGNFSVYNVLAAIATSFALHIPMEKAIKTVESIPGVKGRFELVHAGQEFPVIVDYAHTPDGLLNVLETIDEFAEKRVFVVVGCGGDRDKGKRPQMAKIAVDYATNPIFTSDNPRSENPRAIIEDMIQGVPESDAYVVHENRRDAIRFAVNQAEAGDVILIAGKGHEDYQVVGDEVIDFDDRVEARIAIEKKLGLA.

Serine 30 is a binding site for UDP-N-acetyl-alpha-D-muramoyl-L-alanyl-D-glutamate. Position 108 to 114 (108 to 114 (GTNGKTT)) interacts with ATP. Residues asparagine 149, 150-151 (TT), serine 177, glutamine 183, and arginine 185 contribute to the UDP-N-acetyl-alpha-D-muramoyl-L-alanyl-D-glutamate site. Lysine 217 bears the N6-carboxylysine mark. Residues arginine 383, 407 to 410 (DNPR), glycine 458, and glutamate 462 contribute to the meso-2,6-diaminopimelate site. The Meso-diaminopimelate recognition motif signature appears at 407–410 (DNPR).

Belongs to the MurCDEF family. MurE subfamily. It depends on Mg(2+) as a cofactor. Post-translationally, carboxylation is probably crucial for Mg(2+) binding and, consequently, for the gamma-phosphate positioning of ATP.

The protein resides in the cytoplasm. The enzyme catalyses UDP-N-acetyl-alpha-D-muramoyl-L-alanyl-D-glutamate + meso-2,6-diaminopimelate + ATP = UDP-N-acetyl-alpha-D-muramoyl-L-alanyl-gamma-D-glutamyl-meso-2,6-diaminopimelate + ADP + phosphate + H(+). It participates in cell wall biogenesis; peptidoglycan biosynthesis. Catalyzes the addition of meso-diaminopimelic acid to the nucleotide precursor UDP-N-acetylmuramoyl-L-alanyl-D-glutamate (UMAG) in the biosynthesis of bacterial cell-wall peptidoglycan. The chain is UDP-N-acetylmuramoyl-L-alanyl-D-glutamate--2,6-diaminopimelate ligase from Listeria monocytogenes serovar 1/2a (strain ATCC BAA-679 / EGD-e).